A 440-amino-acid chain; its full sequence is uncharacterized protein (440 aa).

The signal sequence occupies residues 1–19 (MKKLLLAASIVYFASACLA).

This is an uncharacterized protein from Rickettsia prowazekii (strain Madrid E).